The primary structure comprises 681 residues: PTS system glucose-specific EIICBA component (681 aa).

In terms of domain architecture, PTS EIIC type-1 spans 3 to 414; the sequence is KKLFGQLQRI…LKYKTPGRED (412 aa). The next 10 membrane-spanning stretches (helical) occupy residues 16-36, 73-93, 126-146, 170-190, 199-219, 273-293, 303-323, 328-348, 355-375, and 383-403; these read LMLPVAILPAAGLLLAIGTAI, MIFALGVAIGLAGGDGVAAIA, ILGIPTLQTGVFGGIIIGALA, FVPIMMATTSFILAFPMALIW, AFSTGLLDSNTGVAVFLFGFI, FMQGEFPVMMFGLPAAALAIY, VVAGLMGSAALTSFLTGITEP, FLFVAPLLFFIHAVLDGLSFL, VHLGYTFSGGFIDYVLLGVLP, and VIPVGLVYAVIYYFVFRFLIV. Residues 425–506 form the PTS EIIB type-1 domain; sequence TELPYAVLEA…QQIMNGQVVE (82 aa). Residue C447 is the Phosphocysteine intermediate; for EIIB activity of the active site. The region spanning 551–655 is the PTS EIIA type-1 domain; the sequence is DQVFSEKMMG…SDITPIIVTQ (105 aa). The active-site Tele-phosphohistidine intermediate; for EIIA activity is the H603.

It localises to the cell membrane. It carries out the reaction N(pros)-phospho-L-histidyl-[protein] + D-glucose(out) = D-glucose 6-phosphate(in) + L-histidyl-[protein]. Functionally, the phosphoenolpyruvate-dependent sugar phosphotransferase system (sugar PTS), a major carbohydrate active transport system, catalyzes the phosphorylation of incoming sugar substrates concomitantly with their translocation across the cell membrane. This system is involved in glucose transport. This is PTS system glucose-specific EIICBA component (ptsG) from Staphylococcus aureus (strain JH9).